The primary structure comprises 123 residues: Small ribosomal subunit protein bS18 (123 aa).

The span at 1–10 (MADETTVSTP) shows a compositional bias: polar residues. The tract at residues 1–52 (MADETTVSTPAASGTETPSTGGGGAPQGRPQGGPRGDRGPRPGGSGRDGGRK) is disordered. The segment covering 20–34 (TGGGGAPQGRPQGGP) has biased composition (gly residues).

It belongs to the bacterial ribosomal protein bS18 family. As to quaternary structure, part of the 30S ribosomal subunit. Forms a tight heterodimer with protein bS6.

Functionally, binds as a heterodimer with protein bS6 to the central domain of the 16S rRNA, where it helps stabilize the platform of the 30S subunit. The chain is Small ribosomal subunit protein bS18 from Koribacter versatilis (strain Ellin345).